The primary structure comprises 265 residues: Ubiquinone biosynthesis protein COQ4 homolog, mitochondrial (265 aa).

Residues 1–30 (MMQRSWQSWRRGLTLGLASRRSYVASVEAP) constitute a mitochondrion transit peptide. Residues H170, D171, H174, and E186 each coordinate Zn(2+).

The protein belongs to the COQ4 family. Component of a multi-subunit COQ enzyme complex. Requires Zn(2+) as cofactor.

The protein resides in the mitochondrion inner membrane. It catalyses the reaction a 4-hydroxy-3-methoxy-5-(all-trans-polyprenyl)benzoate + H(+) = a 2-methoxy-6-(all-trans-polyprenyl)phenol + CO2. The protein operates within cofactor biosynthesis; ubiquinone biosynthesis. Its function is as follows. Lyase that catalyzes the C1-decarboxylation of 4-hydroxy-3-methoxy-5-(all-trans-polyprenyl)benzoic acid into 2-methoxy-6-(all-trans-polyprenyl)phenol during ubiquinone biosynthesis. The sequence is that of Ubiquinone biosynthesis protein COQ4 homolog, mitochondrial from Drosophila virilis (Fruit fly).